Reading from the N-terminus, the 267-residue chain is Small ribosomal subunit protein uS3 (267 aa).

Residues 39–114 (IRKYLETNLK…RVNINIVEIR (76 aa)) form the KH type-2 domain. The segment covering 229-248 (ANNRGRGNNRGRGNSRQNGG) has biased composition (low complexity). The interval 229–267 (ANNRGRGNNRGRGNSRQNGGRSRRPRQGQASTQGRGGNN) is disordered.

This sequence belongs to the universal ribosomal protein uS3 family. In terms of assembly, part of the 30S ribosomal subunit. Forms a tight complex with proteins S10 and S14.

Its function is as follows. Binds the lower part of the 30S subunit head. Binds mRNA in the 70S ribosome, positioning it for translation. In Oenococcus oeni (strain ATCC BAA-331 / PSU-1), this protein is Small ribosomal subunit protein uS3.